The primary structure comprises 563 residues: Arginine--tRNA ligase (563 aa).

The 'HIGH' region signature appears at proline 120 to histidine 130.

This sequence belongs to the class-I aminoacyl-tRNA synthetase family. As to quaternary structure, monomer.

The protein localises to the cytoplasm. It carries out the reaction tRNA(Arg) + L-arginine + ATP = L-arginyl-tRNA(Arg) + AMP + diphosphate. This is Arginine--tRNA ligase from Clostridium beijerinckii (strain ATCC 51743 / NCIMB 8052) (Clostridium acetobutylicum).